A 397-amino-acid chain; its full sequence is LIM/homeobox protein Lhx9 (397 aa).

LIM zinc-binding domains are found at residues 69-130 (ALCA…RFSV) and 131-193 (QRCA…LLQG). Disordered regions lie at residues 248–272 (ENEA…RMRT), 330–365 (ENGG…LTDL), and 378–397 (SNMD…TNLF). A DNA-binding region (homeobox) is located at residues 267–326 (TKRMRTSFKHHQLRTMKSYFAINHNPDAKDLKQLAQKTGLTKRVLQVWFQNARAKFRRNL). Residues 353–365 (LTPPGTATTLTDL) show a composition bias toward low complexity. Over residues 387–397 (SPSQTTLTNLF) the composition is skewed to polar residues.

In terms of assembly, interacts with LDB1 and LDB2. As to expression, expressed in the dorsal thalamus and inner nuclei of the cerebellum.

It localises to the nucleus. Functionally, involved in gonadal development. In Mus musculus (Mouse), this protein is LIM/homeobox protein Lhx9 (Lhx9).